Here is a 388-residue protein sequence, read N- to C-terminus: Formate-dependent phosphoribosylglycinamide formyltransferase (388 aa).

N(1)-(5-phospho-beta-D-ribosyl)glycinamide is bound by residues 21 to 22 (EL) and Glu-81. ATP-binding positions include Arg-113, Lys-154, 159 to 164 (SSGHGQ), 193 to 196 (EEFI), and Glu-201. In terms of domain architecture, ATP-grasp spans 118 to 306 (KFAAEELGLK…EFALHVRAVL (189 aa)). Glu-265 and Glu-277 together coordinate Mg(2+). N(1)-(5-phospho-beta-D-ribosyl)glycinamide contacts are provided by residues Asp-284, Lys-352, and 359 to 360 (RR).

This sequence belongs to the PurK/PurT family. Homodimer.

It catalyses the reaction N(1)-(5-phospho-beta-D-ribosyl)glycinamide + formate + ATP = N(2)-formyl-N(1)-(5-phospho-beta-D-ribosyl)glycinamide + ADP + phosphate + H(+). Its pathway is purine metabolism; IMP biosynthesis via de novo pathway; N(2)-formyl-N(1)-(5-phospho-D-ribosyl)glycinamide from N(1)-(5-phospho-D-ribosyl)glycinamide (formate route): step 1/1. Involved in the de novo purine biosynthesis. Catalyzes the transfer of formate to 5-phospho-ribosyl-glycinamide (GAR), producing 5-phospho-ribosyl-N-formylglycinamide (FGAR). Formate is provided by PurU via hydrolysis of 10-formyl-tetrahydrofolate. This Nitratiruptor sp. (strain SB155-2) protein is Formate-dependent phosphoribosylglycinamide formyltransferase.